The following is a 567-amino-acid chain: Phenylalanine--tRNA ligase beta subunit (567 aa).

One can recognise a B5 domain in the interval Y287–P362. Positions 340, 346, 349, and 350 each coordinate Mg(2+).

This sequence belongs to the phenylalanyl-tRNA synthetase beta subunit family. Type 2 subfamily. Tetramer of two alpha and two beta subunits. The cofactor is Mg(2+).

The protein resides in the cytoplasm. The catalysed reaction is tRNA(Phe) + L-phenylalanine + ATP = L-phenylalanyl-tRNA(Phe) + AMP + diphosphate + H(+). The chain is Phenylalanine--tRNA ligase beta subunit from Borreliella afzelii (strain PKo) (Borrelia afzelii).